The primary structure comprises 145 residues: LIRP (145 aa).

The or 22 signal peptide spans 1–19 (MWKLCLRLLAVLAVCLSTA). Propeptides lie at residues 20–33 (TQAQSDLFLLSPKR) and 117–122 (FRRRTR). 3 disulfides stabilise this stretch: Cys44–Cys129, Cys56–Cys142, and Cys128–Cys133.

This sequence belongs to the insulin family. In terms of assembly, heterodimer of a B chain and an A chain linked by two disulfide bonds.

Its subcellular location is the secreted. This is LIRP from Locusta migratoria (Migratory locust).